We begin with the raw amino-acid sequence, 130 residues long: Ribosome-binding factor A (130 aa).

It belongs to the RbfA family. As to quaternary structure, monomer. Binds 30S ribosomal subunits, but not 50S ribosomal subunits or 70S ribosomes.

The protein resides in the cytoplasm. Its function is as follows. One of several proteins that assist in the late maturation steps of the functional core of the 30S ribosomal subunit. Associates with free 30S ribosomal subunits (but not with 30S subunits that are part of 70S ribosomes or polysomes). Required for efficient processing of 16S rRNA. May interact with the 5'-terminal helix region of 16S rRNA. The protein is Ribosome-binding factor A of Roseiflexus sp. (strain RS-1).